The chain runs to 335 residues: Probable cytosolic iron-sulfur protein assembly protein Ciao1 (335 aa).

7 WD repeats span residues 12 to 51 (GHKG…WSTK), 57 to 96 (GHKR…FECN), 101 to 140 (GHEN…EFEC), 146 to 185 (AHTQ…SDWD), 192 to 231 (SHTS…NDAG), 250 to 289 (QHSR…KRDE), and 301 to 335 (AHEQ…KVDD).

This sequence belongs to the WD repeat CIA1 family.

Essential component of the cytosolic iron-sulfur (Fe/S) protein assembly machinery. Required for the maturation of extramitochondrial Fe/S proteins. The chain is Probable cytosolic iron-sulfur protein assembly protein Ciao1 from Drosophila pseudoobscura pseudoobscura (Fruit fly).